The following is a 690-amino-acid chain: UvrABC system protein C (690 aa).

The GIY-YIG domain occupies 15–94 (TDPGVYTFRD…IKRFNPRFNV (80 aa)). In terms of domain architecture, UVR spans 207-242 (EPVLRRVRKEMEQASENLDFERAASLRDQLQAMQKS).

This sequence belongs to the UvrC family. Interacts with UvrB in an incision complex.

It localises to the cytoplasm. Its function is as follows. The UvrABC repair system catalyzes the recognition and processing of DNA lesions. UvrC both incises the 5' and 3' sides of the lesion. The N-terminal half is responsible for the 3' incision and the C-terminal half is responsible for the 5' incision. This Corynebacterium jeikeium (strain K411) protein is UvrABC system protein C.